The following is a 608-amino-acid chain: Fatty acid amide hydrolase (608 aa).

Residues K206 and S282 each act as charge relay system in the active site. A substrate-binding site is contributed by 303–306; sequence GGGS. The active-site Acyl-ester intermediate is the S306.

Belongs to the amidase family. Forms homodimers.

The protein resides in the endoplasmic reticulum membrane. Its subcellular location is the cell membrane. It carries out the reaction N-(9Z,12Z-octadecadienoyl)-ethanolamine + H2O = ethanolamine + (9Z,12Z)-octadecadienoate. It catalyses the reaction N-hexadecanoylethanolamine + H2O = ethanolamine + hexadecanoate. The catalysed reaction is N-dodecanoylethanolamine + H2O = dodecanoate + ethanolamine. Its activity is regulated as follows. Inhibited by methyl arachidonyl fluorophosphonate (MAFP). Functionally, catalyzes the hydrolysis of bioactive endogenous fatty acid amides to their corresponding acids. The hydrolysis of endogenous amidated lipids terminates their participation as lipid mediators in various signaling systems. Converts a wide range of N-acylethanolamines (NAEs) to their corresponding free fatty acids and ethanolamine. The polypeptide is Fatty acid amide hydrolase (Oryza sativa subsp. japonica (Rice)).